Reading from the N-terminus, the 53-residue chain is Antitoxin RelB3 (53 aa).

As to quaternary structure, forms heterodimers with RelE and possibly a heterotetramer RelE3-RelB3(2)-RelE3 from 2 heterodimers. The heterotetramer is probably not very stable in solution.

Its function is as follows. Antitoxin component of a type II toxin-antitoxin (TA) system. Probably neutralizes the toxic activity of cognate toxin RelE. The polypeptide is Antitoxin RelB3 (relB3) (Methanocaldococcus jannaschii (strain ATCC 43067 / DSM 2661 / JAL-1 / JCM 10045 / NBRC 100440) (Methanococcus jannaschii)).